Here is a 721-residue protein sequence, read N- to C-terminus: Polyribonucleotide nucleotidyltransferase (721 aa).

Residues aspartate 495 and aspartate 501 each coordinate Mg(2+). The region spanning 562 to 621 (PRLLSFRIDPELIGTVIGPGGRTIKGITERTNTKIDIEDGGIVTIASHDGAAAEAAQRII) is the KH domain. Positions 631 to 699 (GEVFSGTITR…NRGRINLTLR (69 aa)) constitute an S1 motif domain. The segment at 700-721 (GVPQNGEETQSEPAPTPVAPLN) is disordered.

It belongs to the polyribonucleotide nucleotidyltransferase family. Mg(2+) is required as a cofactor.

It localises to the cytoplasm. The enzyme catalyses RNA(n+1) + phosphate = RNA(n) + a ribonucleoside 5'-diphosphate. Its function is as follows. Involved in mRNA degradation. Catalyzes the phosphorolysis of single-stranded polyribonucleotides processively in the 3'- to 5'-direction. The chain is Polyribonucleotide nucleotidyltransferase from Prochlorococcus marinus (strain MIT 9303).